The following is a 332-amino-acid chain: Phosphatidylglycerol--prolipoprotein diacylglyceryl transferase (332 aa).

The next 3 helical transmembrane spans lie at 18–38, 66–86, and 111–131; these read FPYFRWYGFMYVVAFSIAYIL, FFTWTILGILIGARVFSTMVY, and VGLRGMSYHGGLIGALVGGGL. Residue Arg159 participates in a 1,2-diacyl-sn-glycero-3-phospho-(1'-sn-glycerol) binding. 2 helical membrane passes run 249–269 and 302–322; these read GFLVCLYVVGYGVFRFFIEYF and ILCVLMILAGLGGMFALSAYH.

The protein belongs to the Lgt family.

Its subcellular location is the cell inner membrane. The catalysed reaction is L-cysteinyl-[prolipoprotein] + a 1,2-diacyl-sn-glycero-3-phospho-(1'-sn-glycerol) = an S-1,2-diacyl-sn-glyceryl-L-cysteinyl-[prolipoprotein] + sn-glycerol 1-phosphate + H(+). Its pathway is protein modification; lipoprotein biosynthesis (diacylglyceryl transfer). Its function is as follows. Catalyzes the transfer of the diacylglyceryl group from phosphatidylglycerol to the sulfhydryl group of the N-terminal cysteine of a prolipoprotein, the first step in the formation of mature lipoproteins. This Treponema pallidum (strain Nichols) protein is Phosphatidylglycerol--prolipoprotein diacylglyceryl transferase.